We begin with the raw amino-acid sequence, 434 residues long: Beta-enolase (434 aa).

An N-acetylalanine modification is found at Ala-2. At Thr-72 the chain carries Phosphothreonine. A phosphoserine mark is found at Ser-83 and Ser-157. Residues His-158 and Glu-167 each contribute to the substrate site. Ser-176 carries the phosphoserine modification. At Thr-205 the chain carries Phosphothreonine. Glu-210 functions as the Proton donor in the catalytic mechanism. Thr-229 is modified (phosphothreonine). Tyr-236 bears the Phosphotyrosine mark. Asp-245 is a binding site for Mg(2+). Ser-263 is modified (phosphoserine). The substrate site is built by Glu-293 and Asp-318. 2 residues coordinate Mg(2+): Glu-293 and Asp-318. The active-site Proton acceptor is the Lys-343. Substrate is bound by residues 370 to 373 and Lys-394; that span reads SHRS.

The protein belongs to the enolase family. As to quaternary structure, mammalian enolase is composed of 3 isozyme subunits, alpha, beta and gamma, which can form homodimers or heterodimers which are cell-type and development-specific. In vitro, interacts with several glycolytic enzymes including PKM, PGM, CKM and ALDO. Also binds PLG and troponin, in vitro. Interacts with PNKD. Mg(2+) is required as a cofactor. Brain (at protein level). The alpha/alpha homodimer is expressed in embryo and in most adult tissues. The alpha/beta heterodimer and the beta/beta homodimer are found in striated muscle, and the alpha/gamma heterodimer and the gamma/gamma homodimer in neurons. In striated muscle, the fiber-type order of ENO3 expression is IIB &gt; IIX &gt; IIA &gt; I.

Its subcellular location is the cytoplasm. It catalyses the reaction (2R)-2-phosphoglycerate = phosphoenolpyruvate + H2O. Its pathway is carbohydrate degradation; glycolysis; pyruvate from D-glyceraldehyde 3-phosphate: step 4/5. In terms of biological role, glycolytic enzyme that catalyzes the conversion of 2-phosphoglycerate to phosphoenolpyruvate. Appears to have a function in striated muscle development and regeneration. In Mus musculus (Mouse), this protein is Beta-enolase (Eno3).